A 305-amino-acid polypeptide reads, in one-letter code: Ribosomal RNA small subunit methyltransferase H (305 aa).

S-adenosyl-L-methionine-binding positions include 33 to 35, Asp-51, Phe-82, Asp-96, and Gln-103; that span reads GGY.

Belongs to the methyltransferase superfamily. RsmH family.

The protein resides in the cytoplasm. The catalysed reaction is cytidine(1402) in 16S rRNA + S-adenosyl-L-methionine = N(4)-methylcytidine(1402) in 16S rRNA + S-adenosyl-L-homocysteine + H(+). Its function is as follows. Specifically methylates the N4 position of cytidine in position 1402 (C1402) of 16S rRNA. This chain is Ribosomal RNA small subunit methyltransferase H, found in Rickettsia bellii (strain OSU 85-389).